The following is a 429-amino-acid chain: Enolase (429 aa).

(2R)-2-phosphoglycerate is bound at residue Q163. E205 serves as the catalytic Proton donor. Mg(2+)-binding residues include D242, E285, and D312. (2R)-2-phosphoglycerate contacts are provided by K337, R366, S367, and K388. The active-site Proton acceptor is K337.

Belongs to the enolase family. Component of the RNA degradosome, a multiprotein complex involved in RNA processing and mRNA degradation. The cofactor is Mg(2+).

It is found in the cytoplasm. Its subcellular location is the secreted. The protein resides in the cell surface. It carries out the reaction (2R)-2-phosphoglycerate = phosphoenolpyruvate + H2O. Its pathway is carbohydrate degradation; glycolysis; pyruvate from D-glyceraldehyde 3-phosphate: step 4/5. Functionally, catalyzes the reversible conversion of 2-phosphoglycerate (2-PG) into phosphoenolpyruvate (PEP). It is essential for the degradation of carbohydrates via glycolysis. The protein is Enolase of Alkalilimnicola ehrlichii (strain ATCC BAA-1101 / DSM 17681 / MLHE-1).